We begin with the raw amino-acid sequence, 1283 residues long: MTADIRVSIDRGGTFCDVIAHVEGREPIIFKLLSVDPANYQDAPTEGIRRVLEIVEGKKIPVGEKLDGTRIASCRLGTTVATNALLEGKYEKFALVTTKGFEDVCVIGDQSRPKLFDLKVKKAEALHDTVIGVDERVTIEDYDLNPYPLDKSASLNDPDLVRTPSGEIIRILARVNEETVREQLLALRDAGYNSVAISFMHSYIFPDHEDQVAKIAREVGFTYVTTSAETRPVLKYLNRSTSCCSEACLYPVIRRYIENFESGFRVLPRRVDFMCSDGGLKQSQKFRGNEALLSGPAGGVVGIATSCYDVEQKIPIIGFDMGGTSTDVSRFDGKYDYLSETVIADRTISMPMLNISTVAAGGGSILFARSGLLVVGPESAGAHPGPACYRKGGPLTVTDANLFLGRLVVSSFPSIFGENADQPLDQDVVTAKFQEITADFNSQTSQNLTAEEVALGFLDVANEAMSRPIRNTTEARGFAPEKHNLVSFGGAGGQHACAIASKLGIKRVLIHKWSSLLSAHGISQADLQYESFEPLSLDFGMDLNGFIKERLSLLREKVAAGLLAQGAQESTLRFDESLVMKYFGTDTTITVTTPDDLDYGAAFEALHLREFAFKLNRKIVIDSVNVRGTGSAVTLATEEPPLKALARVKSVATTAQTTEEQKVYINGSWRKVPIYRLDQLSKGCAVSGPAMIIDKTQTIFVEPRFNAYILPDHVILEESNVEDTVTRQAVSAEEINPLLLSVFAHRFMSIAEQMGNTLQRTSVSSSIKERLDFSCAIFSREGKLVANAPHIPIHLGSMQMAIRYQHEAWKGKLKPGDALVTNHPLSGGTHLPDLTVVSPVFVNGDVAFYVASRGHHTDIGGKGIAAMMPESKELWEEGISIKTMKIVSGGEFLEDEIRAAFDKAGSFPGCSPTRRIADNLSDLKAQIASNQRGIILLGNLCEEFTLPVVCTYMEGIQANAEFAVRRFLKQLAKKHPEPLTAIDYFDDGTPIKIKIIIDPETGGAVYDFSGTGPQQWGNYNCPISITHSAIIYTLRCLVDVDIPLNEGCLTPIDIRVPYGSMLNPSPAVAICGSTLASQRVIDTILRAFRRCAASQGCASSFSWGMGGRDPETGKVLPGWNYGESLGGGVGALPGYHGESAINVHSTNTRNTDPEVVEKRTAVLVTKYAVRKGSGGRGQWRGGDGVTREIQARIPLKFSILSDRRVYRPYGMEGGEAGHRGQNYVFKFNQEGTGFEQINLGGKAVVVLNPGEKMQINTPGGGAWGKPEGDADGYREEDQAGDGI.

The interval 1256–1283 (NTPGGGAWGKPEGDADGYREEDQAGDGI) is disordered. Positions 1266–1277 (PEGDADGYREED) are enriched in basic and acidic residues.

This sequence belongs to the oxoprolinase family. In terms of assembly, homodimer.

It catalyses the reaction 5-oxo-L-proline + ATP + 2 H2O = L-glutamate + ADP + phosphate + H(+). Functionally, 5-oxoprolinase; part of the gene cluster that mediates the biosynthesis of dihydroxynaphthalene (DHN)-melanin, a bluish-green pigment forming a dark layer in the conidial wall that protects the conidia from UV radiations. The first step of the pathway is the production of the pentaketide 1,3,6,8-tetrahydroxynaphthalene (1,3,6,8-THN or T4HN) by the polyketide synthase PfmaE though condensation of acetyl-CoA with malonyl-CoA. T4HN is not stable and easily oxidizes into the stable form flaviolin. T4HN is also substrate of the hydroxynaphthalene reductase PfmaG to yield scytalone. The scytalone dehydratase PfmaJ then reduces scytalone to 1,3,8-THN. 1,3,8-THN is then substrate of the hydroxynaphthalene reductase PfmaI to yield vermelone. Vermelone is further converted by the multicopper oxidase PfmaD to 1,8-DHN. Finally the laccase PFICI_06862 transforms 1,8-DHN to DHN-melanin. The roles of the 5-oxoprolinase PfmaA and the proline iminopeptidase PfmaB within the cluster have not been elucidated yet. The sequence is that of 5-oxoprolinase PfmaA from Pestalotiopsis fici (strain W106-1 / CGMCC3.15140).